A 162-amino-acid chain; its full sequence is CASP-like protein 1C1 (162 aa).

Residues 1–7 (MFSAKAR) lie on the Cytoplasmic side of the membrane. A helical membrane pass occupies residues 8 to 28 (WIVAVVLRVAAAGAAAVAAVL). Residues 29–52 (MAMSHDEVIVYGMEVQAKFRYTPS) lie on the Extracellular side of the membrane. A helical transmembrane segment spans residues 53–73 (LVFFVAANAAVSACSLVVLLV). Residues 74-83 (PSSTSKLAAR) lie on the Cytoplasmic side of the membrane. The chain crosses the membrane as a helical span at residues 84 to 104 (LLLMADVVLGMVLAGAFAAAG). Topologically, residues 105–135 (AMAELGKNGNSHAGWIAICVQVPLFCDRVRS) are extracellular. A helical membrane pass occupies residues 136-156 (ALVAGSATIVLYYLMLMYSIY). Topologically, residues 157 to 162 (TLPMFP) are cytoplasmic.

The protein belongs to the Casparian strip membrane proteins (CASP) family. In terms of assembly, homodimer and heterodimers.

The protein localises to the cell membrane. This Oryza sativa subsp. japonica (Rice) protein is CASP-like protein 1C1.